Reading from the N-terminus, the 310-residue chain is Protoheme IX farnesyltransferase 2 (310 aa).

9 helical membrane passes run 25–45 (PGII…AAKG), 49–69 (LVLM…GCAI), 87–107 (RVTV…LALG), 120–139 (ALAL…VYSL), 145–165 (SVYG…VGYC), 176–196 (AILL…IAIF), 220–240 (LHIV…PLAG), 242–262 (TGIA…AMAL), and 277–297 (QVFG…ALDF).

It belongs to the UbiA prenyltransferase family. Protoheme IX farnesyltransferase subfamily.

The protein resides in the cell inner membrane. The catalysed reaction is heme b + (2E,6E)-farnesyl diphosphate + H2O = Fe(II)-heme o + diphosphate. The protein operates within porphyrin-containing compound metabolism; heme O biosynthesis; heme O from protoheme: step 1/1. Functionally, converts heme B (protoheme IX) to heme O by substitution of the vinyl group on carbon 2 of heme B porphyrin ring with a hydroxyethyl farnesyl side group. This is Protoheme IX farnesyltransferase 2 from Shewanella baltica (strain OS185).